The chain runs to 51 residues: uncharacterized protein (51 aa).

Residues Glu-3–Leu-30 adopt a coiled-coil conformation.

This is an uncharacterized protein from Bacillus subtilis (strain 168).